The chain runs to 130 residues: UPF0225 protein CE1570 (130 aa).

Belongs to the UPF0225 family.

In Corynebacterium efficiens (strain DSM 44549 / YS-314 / AJ 12310 / JCM 11189 / NBRC 100395), this protein is UPF0225 protein CE1570.